The primary structure comprises 327 residues: Methionyl-tRNA formyltransferase (327 aa).

121-124 (SLLP) provides a ligand contact to (6S)-5,6,7,8-tetrahydrofolate.

This sequence belongs to the Fmt family.

It catalyses the reaction L-methionyl-tRNA(fMet) + (6R)-10-formyltetrahydrofolate = N-formyl-L-methionyl-tRNA(fMet) + (6S)-5,6,7,8-tetrahydrofolate + H(+). Functionally, attaches a formyl group to the free amino group of methionyl-tRNA(fMet). The formyl group appears to play a dual role in the initiator identity of N-formylmethionyl-tRNA by promoting its recognition by IF2 and preventing the misappropriation of this tRNA by the elongation apparatus. The polypeptide is Methionyl-tRNA formyltransferase (Burkholderia ambifaria (strain ATCC BAA-244 / DSM 16087 / CCUG 44356 / LMG 19182 / AMMD) (Burkholderia cepacia (strain AMMD))).